The primary structure comprises 88 residues: Small ribosomal subunit protein uS15 (88 aa).

This sequence belongs to the universal ribosomal protein uS15 family. Part of the 30S ribosomal subunit. Forms a bridge to the 50S subunit in the 70S ribosome, contacting the 23S rRNA.

Functionally, one of the primary rRNA binding proteins, it binds directly to 16S rRNA where it helps nucleate assembly of the platform of the 30S subunit by binding and bridging several RNA helices of the 16S rRNA. Its function is as follows. Forms an intersubunit bridge (bridge B4) with the 23S rRNA of the 50S subunit in the ribosome. This is Small ribosomal subunit protein uS15 from Albidiferax ferrireducens (strain ATCC BAA-621 / DSM 15236 / T118) (Rhodoferax ferrireducens).